Consider the following 305-residue polypeptide: Oxygen-dependent coproporphyrinogen-III oxidase (305 aa).

S98 provides a ligand contact to substrate. The a divalent metal cation site is built by H102 and H112. Residue H112 is the Proton donor of the active site. Residue 114–116 (NVR) participates in substrate binding. The a divalent metal cation site is built by H151 and H181. An important for dimerization region spans residues 246–281 (YVEFNLVYDRGTLFGLQSGGRTESILMSMPPLARWE). 264–266 (GGR) contributes to the substrate binding site.

The protein belongs to the aerobic coproporphyrinogen-III oxidase family. In terms of assembly, homodimer. Requires a divalent metal cation as cofactor.

Its subcellular location is the cytoplasm. The catalysed reaction is coproporphyrinogen III + O2 + 2 H(+) = protoporphyrinogen IX + 2 CO2 + 2 H2O. It participates in porphyrin-containing compound metabolism; protoporphyrin-IX biosynthesis; protoporphyrinogen-IX from coproporphyrinogen-III (O2 route): step 1/1. Functionally, involved in the heme biosynthesis. Catalyzes the aerobic oxidative decarboxylation of propionate groups of rings A and B of coproporphyrinogen-III to yield the vinyl groups in protoporphyrinogen-IX. The polypeptide is Oxygen-dependent coproporphyrinogen-III oxidase (Vibrio parahaemolyticus serotype O3:K6 (strain RIMD 2210633)).